A 286-amino-acid chain; its full sequence is Pantothenate synthetase (286 aa).

Residue 30–37 (MGNLHSGH) participates in ATP binding. H37 serves as the catalytic Proton donor. (R)-pantoate is bound at residue Q61. Q61 contacts beta-alanine. 149 to 152 (GQKD) is a binding site for ATP. A (R)-pantoate-binding site is contributed by Q155. ATP contacts are provided by residues V178 and 186–189 (LSSR).

This sequence belongs to the pantothenate synthetase family. Homodimer.

It localises to the cytoplasm. The catalysed reaction is (R)-pantoate + beta-alanine + ATP = (R)-pantothenate + AMP + diphosphate + H(+). It functions in the pathway cofactor biosynthesis; (R)-pantothenate biosynthesis; (R)-pantothenate from (R)-pantoate and beta-alanine: step 1/1. In terms of biological role, catalyzes the condensation of pantoate with beta-alanine in an ATP-dependent reaction via a pantoyl-adenylate intermediate. The polypeptide is Pantothenate synthetase (Pseudomonas fluorescens (strain ATCC BAA-477 / NRRL B-23932 / Pf-5)).